We begin with the raw amino-acid sequence, 346 residues long: MNPHAKLISLISLLLGTTITISSNHWIMAWTGLEINTLAIIPLISKSHHPRAVEASVKYFLVQAAASALVLFSSMSNAWATGQWDITQLTHPTASMLLTAAIAIKLGLVPFHFWFPEVLQGTSLTTALLLSTLMKLPPMAILLMTSPSLNPTVLTSMALASAALGGWMGLNQTQTRKILAFSSIAHLGWMTMIIIYNPKLTLLTFYLYILMTATVFLSLNTTKTLKLSTLMTSWTKAPVLNAALMLTLLSLAGLPPLTGFMPKWLILQELTKQEMTTVATIIALLSLLGLFFYLRLAYYATITLPPNSANHMKQWYISNPTNTSIAILSSLSAILLPISPMILAAL.

The next 11 membrane-spanning stretches (helical) occupy residues 1-21 (MNPH…TITI), 25-45 (HWIM…PLIS), 60-80 (FLVQ…NAWA), 96-116 (MLLT…FWFP), 124-144 (LTTA…ILLM), 149-169 (LNPT…GWMG), 178-198 (ILAF…IYNP), 200-220 (LTLL…LSLN), 242-262 (AALM…GFMP), 274-294 (EMTT…FFYL), and 325-345 (IAIL…ILAA).

This sequence belongs to the complex I subunit 2 family.

Its subcellular location is the mitochondrion inner membrane. It catalyses the reaction a ubiquinone + NADH + 5 H(+)(in) = a ubiquinol + NAD(+) + 4 H(+)(out). In terms of biological role, core subunit of the mitochondrial membrane respiratory chain NADH dehydrogenase (Complex I) that is believed to belong to the minimal assembly required for catalysis. Complex I functions in the transfer of electrons from NADH to the respiratory chain. The immediate electron acceptor for the enzyme is believed to be ubiquinone. In Struthio camelus (Common ostrich), this protein is NADH-ubiquinone oxidoreductase chain 2 (MT-ND2).